Reading from the N-terminus, the 122-residue chain is Large ribosomal subunit protein uL14c (122 aa).

It belongs to the universal ribosomal protein uL14 family. As to quaternary structure, part of the 50S ribosomal subunit.

It is found in the plastid. The protein localises to the chloroplast. Binds to 23S rRNA. The chain is Large ribosomal subunit protein uL14c from Nicotiana sylvestris (Wood tobacco).